The following is a 439-amino-acid chain: Trigger factor (439 aa).

A PPIase FKBP-type domain is found at 158–233 (GDVINIEYTI…IKEVLKRTLM (76 aa)). The tract at residues 410–439 (KEISADEPVEEQKEEEEKEEAGSENSENKE) is disordered. The span at 414–428 (ADEPVEEQKEEEEKE) shows a compositional bias: acidic residues.

This sequence belongs to the FKBP-type PPIase family. Tig subfamily.

It localises to the cytoplasm. The catalysed reaction is [protein]-peptidylproline (omega=180) = [protein]-peptidylproline (omega=0). Involved in protein export. Acts as a chaperone by maintaining the newly synthesized protein in an open conformation. Functions as a peptidyl-prolyl cis-trans isomerase. The sequence is that of Trigger factor from Kosmotoga olearia (strain ATCC BAA-1733 / DSM 21960 / TBF 19.5.1).